Consider the following 631-residue polypeptide: UvrABC system protein C (631 aa).

Positions 26–105 constitute a GIY-YIG domain; that stretch reads SSPGVYQFKN…IKELKPRYNV (80 aa). In terms of domain architecture, UVR spans 219–254; sequence SATIRSLNERMLSFAKELKFEQAAELKTQIDSLKRY.

It belongs to the UvrC family. Interacts with UvrB in an incision complex.

It is found in the cytoplasm. Functionally, the UvrABC repair system catalyzes the recognition and processing of DNA lesions. UvrC both incises the 5' and 3' sides of the lesion. The N-terminal half is responsible for the 3' incision and the C-terminal half is responsible for the 5' incision. This chain is UvrABC system protein C, found in Chlorobium phaeobacteroides (strain DSM 266 / SMG 266 / 2430).